We begin with the raw amino-acid sequence, 170 residues long: Small ribosomal subunit protein uS5 (170 aa).

The region spanning 12-75 (WSELLVSVRR…NAAKKSMIRV (64 aa)) is the S5 DRBM domain.

This sequence belongs to the universal ribosomal protein uS5 family. As to quaternary structure, part of the 30S ribosomal subunit. Contacts proteins S4 and S8.

Its function is as follows. With S4 and S12 plays an important role in translational accuracy. In terms of biological role, located at the back of the 30S subunit body where it stabilizes the conformation of the head with respect to the body. The sequence is that of Small ribosomal subunit protein uS5 from Wolbachia sp. subsp. Brugia malayi (strain TRS).